An 885-amino-acid polypeptide reads, in one-letter code: Alanine--tRNA ligase (885 aa).

Residues His-571, His-575, Cys-674, and His-678 each contribute to the Zn(2+) site.

It belongs to the class-II aminoacyl-tRNA synthetase family. Requires Zn(2+) as cofactor.

The protein localises to the cytoplasm. It catalyses the reaction tRNA(Ala) + L-alanine + ATP = L-alanyl-tRNA(Ala) + AMP + diphosphate. Its function is as follows. Catalyzes the attachment of alanine to tRNA(Ala) in a two-step reaction: alanine is first activated by ATP to form Ala-AMP and then transferred to the acceptor end of tRNA(Ala). Also edits incorrectly charged Ser-tRNA(Ala) and Gly-tRNA(Ala) via its editing domain. This Clavibacter michiganensis subsp. michiganensis (strain NCPPB 382) protein is Alanine--tRNA ligase.